A 115-amino-acid polypeptide reads, in one-letter code: Ribonuclease P protein component (115 aa).

Belongs to the RnpA family. Consists of a catalytic RNA component (M1 or rnpB) and a protein subunit.

The catalysed reaction is Endonucleolytic cleavage of RNA, removing 5'-extranucleotides from tRNA precursor.. In terms of biological role, RNaseP catalyzes the removal of the 5'-leader sequence from pre-tRNA to produce the mature 5'-terminus. It can also cleave other RNA substrates such as 4.5S RNA. The protein component plays an auxiliary but essential role in vivo by binding to the 5'-leader sequence and broadening the substrate specificity of the ribozyme. The chain is Ribonuclease P protein component from Baumannia cicadellinicola subsp. Homalodisca coagulata.